A 115-amino-acid chain; its full sequence is Holo-[acyl-carrier-protein] synthase (115 aa).

Mg(2+) is bound by residues aspartate 6 and glutamate 51.

It belongs to the P-Pant transferase superfamily. AcpS family. Mg(2+) serves as cofactor.

It is found in the cytoplasm. The catalysed reaction is apo-[ACP] + CoA = holo-[ACP] + adenosine 3',5'-bisphosphate + H(+). In terms of biological role, transfers the 4'-phosphopantetheine moiety from coenzyme A to a Ser of acyl-carrier-protein. The sequence is that of Holo-[acyl-carrier-protein] synthase from Campylobacter jejuni subsp. jejuni serotype O:6 (strain 81116 / NCTC 11828).